The sequence spans 689 residues: MNFENLLIEVGTEELPPKSLRKLAESFLANFTEELTKAELSFDSAVWHASPRRLAICINQLALAQADKVVEKRGPAIAQAFDADGNPTKAAQGWARGNGISVEQAERLKTDKGEWLLHQARVVGVETKSLIADMAQRSLDKLPIPKPMRWGSNTTQFIRPVHTVTMLLGSEVVEGELLGIKSDRVIRGHRFMGESSFELDHADNYLVALKEKGKVLADYQARKAIIKTDAEAAAAKIGGVADLEDDLLEEVTSLVEWPVVLTASFEEKFLDVPAEALVYTMKGDQKYFPVFDNAGQLLPNFIFVTNIESKDPQQIISGNEKVVRPRLADAEFFFETDKKESLEARLASLETVVFQKQLGTIKQRVERISALAGYIATSINANSEEAARAGLLSKSDLMTNMVMEFTDLQGTMGMHYARLNGETEAVAVALAEQYKPKFSGDTVPTAPISICVALAEKLDTLVGIFGIGQAPKGAADPFALRRAAIGVLRICLENNLPLDLVDLIAKAQELHGENLTNENVAEQVLEFFMGRFRAWYQDQGVSVDVILAVLARRPTAPADFESRIKAVAHFRTLEQASALAAANKRVSNILAKVEGELPAAIDDKLLVEEAEKALAAKLAELQPQLAPLFAAANYQEALALLASLRESVDTFFEDVMVMADDEALKNNRLALLSSLREQFLHAADISLLQ.

The protein belongs to the class-II aminoacyl-tRNA synthetase family. Tetramer of two alpha and two beta subunits.

It localises to the cytoplasm. It catalyses the reaction tRNA(Gly) + glycine + ATP = glycyl-tRNA(Gly) + AMP + diphosphate. This chain is Glycine--tRNA ligase beta subunit, found in Shewanella halifaxensis (strain HAW-EB4).